The primary structure comprises 443 residues: Elongation factor 1-alpha (443 aa).

In terms of domain architecture, tr-type G spans 5 to 228 (KTHINLVVIG…DTMQPPKRPY (224 aa)). The segment at 14 to 21 (GHVDSGKS) is G1. Residue 14–21 (GHVDSGKS) coordinates GTP. The segment at 70–74 (GITID) is G2. The tract at residues 91–94 (DAPG) is G3. GTP contacts are provided by residues 91-95 (DAPGH) and 153-156 (NKMD). The tract at residues 153 to 156 (NKMD) is G4. The segment at 192–194 (SGF) is G5.

It belongs to the TRAFAC class translation factor GTPase superfamily. Classic translation factor GTPase family. EF-Tu/EF-1A subfamily.

It is found in the cytoplasm. Its function is as follows. This protein promotes the GTP-dependent binding of aminoacyl-tRNA to the A-site of ribosomes during protein biosynthesis. This chain is Elongation factor 1-alpha (MEF-1), found in Plasmodium falciparum (isolate K1 / Thailand).